Here is a 378-residue protein sequence, read N- to C-terminus: Chaperone protein DnaJ (378 aa).

One can recognise a J domain in the interval 3 to 67 (DYYDLLGVSK…QTRGRYDQFG (65 aa)). The CR-type zinc-finger motif lies at 133–215 (GQEREIKIPH…CAGQGVRQVR (83 aa)). Cys146, Cys149, Cys163, Cys166, Cys189, Cys192, Cys203, and Cys206 together coordinate Zn(2+). 4 CXXCXGXG motif repeats span residues 146–153 (CDTCNGTG), 163–170 (CSTCGGVG), 189–196 (CPSCEGTG), and 203–210 (CPACAGQG).

The protein belongs to the DnaJ family. Homodimer. It depends on Zn(2+) as a cofactor.

It localises to the cytoplasm. In terms of biological role, participates actively in the response to hyperosmotic and heat shock by preventing the aggregation of stress-denatured proteins and by disaggregating proteins, also in an autonomous, DnaK-independent fashion. Unfolded proteins bind initially to DnaJ; upon interaction with the DnaJ-bound protein, DnaK hydrolyzes its bound ATP, resulting in the formation of a stable complex. GrpE releases ADP from DnaK; ATP binding to DnaK triggers the release of the substrate protein, thus completing the reaction cycle. Several rounds of ATP-dependent interactions between DnaJ, DnaK and GrpE are required for fully efficient folding. Also involved, together with DnaK and GrpE, in the DNA replication of plasmids through activation of initiation proteins. This Prochlorococcus marinus (strain MIT 9313) protein is Chaperone protein DnaJ.